The chain runs to 385 residues: Prophage integrase IntS (385 aa).

Residues 91–172 (NSFSAIYKEW…RCGEVFRYAI (82 aa)) form the Core-binding (CB) domain. Residues 195–373 (KNFPFLPADQ…QYLDKRREMM (179 aa)) form the Tyr recombinase domain. Residues R234, K261, H324, R327, and H350 contribute to the active site. Y360 acts as the O-(3'-phospho-DNA)-tyrosine intermediate in catalysis.

Belongs to the 'phage' integrase family.

In terms of biological role, integrase is necessary for integration of the phage into the host genome by site-specific recombination. In conjunction with excisionase, integrase is also necessary for excision of the prophage from the host genome. In Escherichia coli (strain K12), this protein is Prophage integrase IntS (intS).